The following is a 122-amino-acid chain: Large ribosomal subunit protein uL22 (122 aa).

The disordered stretch occupies residues 102-122 (VAEGKEMKSSKSHKKNQAEGK).

This sequence belongs to the universal ribosomal protein uL22 family. As to quaternary structure, part of the 50S ribosomal subunit.

In terms of biological role, this protein binds specifically to 23S rRNA; its binding is stimulated by other ribosomal proteins, e.g. L4, L17, and L20. It is important during the early stages of 50S assembly. It makes multiple contacts with different domains of the 23S rRNA in the assembled 50S subunit and ribosome. Functionally, the globular domain of the protein is located near the polypeptide exit tunnel on the outside of the subunit, while an extended beta-hairpin is found that lines the wall of the exit tunnel in the center of the 70S ribosome. This is Large ribosomal subunit protein uL22 from Helicobacter pylori (strain G27).